Reading from the N-terminus, the 79-residue chain is Ferredoxin (79 aa).

2 consecutive 4Fe-4S ferredoxin-type domains span residues 2–30 and 31–60; these read PHVI…YDGG and DQFY…PEED. 2 residues coordinate [3Fe-4S] cluster: C9 and C17. [4Fe-4S] cluster contacts are provided by C21, C40, C43, and C46. [3Fe-4S] cluster is bound at residue C50.

It depends on [4Fe-4S] cluster as a cofactor. [3Fe-4S] cluster is required as a cofactor.

Ferredoxins are iron-sulfur proteins that transfer electrons in a wide variety of metabolic reactions. This chain is Ferredoxin, found in Thermus thermophilus (strain ATCC 27634 / DSM 579 / HB8).